The following is a 415-amino-acid chain: Zona pellucida-like domain-containing protein 1 (415 aa).

Residues 1–19 (MEPIWLLLLLAIFTVSVSA) form the signal peptide. The Extracellular segment spans residues 20–372 (QFNGYNCDAN…QQFQINSVTS (353 aa)). In terms of domain architecture, ZP spans 43 to 320 (YCGVQTITMK…PTCHNRDRRD (278 aa)). 4 cysteine pairs are disulfide-bonded: Cys44–Cys155, Cys79–Cys104, Cys235–Cys296, and Cys255–Cys313. A helical membrane pass occupies residues 373–393 (ALISGVVILGATSLSFFIIAL). The Cytoplasmic segment spans residues 394–415 (TLLNRKKQNSLVLCGIRNPVFN).

Proteolytically cleaved before the transmembrane segment to yield the secreted form found in the extracellular matrix of the cupula.

The protein resides in the cytoplasmic vesicle membrane. It is found in the secreted. Its subcellular location is the extracellular space. The protein localises to the extracellular matrix. Functionally, glycoprotein which is a component of the gelatinous extracellular matrix in the cupulae of the vestibular organ. The polypeptide is Zona pellucida-like domain-containing protein 1 (zpld1) (Xenopus laevis (African clawed frog)).